The primary structure comprises 499 residues: Probable dipeptidase B (499 aa).

Cys-26 is a catalytic residue.

This sequence belongs to the peptidase C69 family.

The enzyme catalyses an L-aminoacyl-L-amino acid + H2O = 2 an L-alpha-amino acid. The protein is Probable dipeptidase B (pepDB) of Streptococcus pyogenes serotype M6 (strain ATCC BAA-946 / MGAS10394).